The following is a 347-amino-acid chain: Ornithine carbamoyltransferase (347 aa).

Residues 56 to 59 (STRT), Gln-83, Arg-107, and 134 to 137 (HPTQ) contribute to the carbamoyl phosphate site. Residues Asn-168, Asp-232, and 236-237 (SM) contribute to the L-ornithine site. Residues 274 to 275 (CL) and Arg-320 contribute to the carbamoyl phosphate site.

This sequence belongs to the aspartate/ornithine carbamoyltransferase superfamily. OTCase family.

The protein localises to the cytoplasm. The catalysed reaction is carbamoyl phosphate + L-ornithine = L-citrulline + phosphate + H(+). Its function is as follows. Reversibly catalyzes the transfer of the carbamoyl group from carbamoyl phosphate (CP) to the N(epsilon) atom of ornithine (ORN) to produce L-citrulline. In Blochmanniella floridana, this protein is Ornithine carbamoyltransferase.